Here is a 663-residue protein sequence, read N- to C-terminus: Zyxin (663 aa).

Residues 35–438 (PPKPKINPFK…QQDQTLGSQG (404 aa)) form a disordered region. Pro residues-rich tracts occupy residues 122–148 (FPPPPPPEFSEPFPPPIEEFFPSPPPL) and 160–211 (VPVP…PPSV). Over residues 298–314 (PQKTTEPPAEASQSSPK) the composition is skewed to polar residues. Composition is skewed to basic and acidic residues over residues 342-353 (QRERPRVLEKPR) and 360-375 (EPEHEPTVEVQVERTR). 2 stretches are compositionally biased toward polar residues: residues 377 to 393 (LGPQTESGRSPGAQSTG) and 427 to 438 (TGQQDQTLGSQG). 3 consecutive LIM zinc-binding domains span residues 470–531 (ELCG…TLEC), 532–589 (CAVC…RRYA), and 590–660 (PRCC…RARA).

The protein belongs to the zyxin/ajuba family. As to quaternary structure, interacts (via LIM2 domain) with hesx1/anf1. As to expression, at the early gastrula stage, expressed at a low level in the animal hemisphere. Expression rises by the end of gastrulation in the anterior part of the embryo, where it gradually increases by the midneurula stage. During neurulation, expression continues most intensively in the anterior part of the neural plate and around it. At later stages, intensely expressed in the brain and at lower levels in the spinal cord, eyes, nasal placodes, within somites, and around the cement gland.

Its subcellular location is the cytoplasm. It localises to the cytoskeleton. The protein localises to the cell junction. The protein resides in the focal adhesion. Its function is as follows. Adhesion plaque protein. May be a component of a signal transduction pathway that mediates adhesion-stimulated changes in gene expression. Suppresses the transcription-repressing activity of hesx1/anf1. In Xenopus laevis (African clawed frog), this protein is Zyxin.